We begin with the raw amino-acid sequence, 607 residues long: Elongation factor 4 (607 aa).

Positions 11-193 constitute a tr-type G domain; it reads KSIRNFSIIA…QIVAKVPAPT (183 aa). GTP is bound by residues 23 to 28 and 140 to 143; these read DHGKST and NKID.

This sequence belongs to the TRAFAC class translation factor GTPase superfamily. Classic translation factor GTPase family. LepA subfamily.

It localises to the cell membrane. It carries out the reaction GTP + H2O = GDP + phosphate + H(+). Functionally, required for accurate and efficient protein synthesis under certain stress conditions. May act as a fidelity factor of the translation reaction, by catalyzing a one-codon backward translocation of tRNAs on improperly translocated ribosomes. Back-translocation proceeds from a post-translocation (POST) complex to a pre-translocation (PRE) complex, thus giving elongation factor G a second chance to translocate the tRNAs correctly. Binds to ribosomes in a GTP-dependent manner. The protein is Elongation factor 4 of Exiguobacterium sibiricum (strain DSM 17290 / CCUG 55495 / CIP 109462 / JCM 13490 / 255-15).